The chain runs to 375 residues: UDP-4-amino-4,6-dideoxy-N-acetyl-beta-L-altrosamine transaminase (375 aa).

Substrate-binding positions include tyrosine 6, 26 to 29 (KQLT), alanine 56, and serine 178. Position 183 is an N6-(pyridoxal phosphate)lysine (lysine 183). Substrate contacts are provided by residues asparagine 228 and 313 to 316 (QVHY).

This sequence belongs to the DegT/DnrJ/EryC1 family.

It catalyses the reaction UDP-4-amino-4,6-dideoxy-N-acetyl-beta-L-altrosamine + 2-oxoglutarate = UDP-2-acetamido-2,6-dideoxy-beta-L-arabino-hex-4-ulose + L-glutamate. Catalyzes the second step in the biosynthesis of pseudaminic acid, a sialic-acid-like sugar that is used to modify flagellin. Uses UDP-2-acetamido-2,6-dideoxy-beta-L-arabino-4-hexulose as substrate producing UDP-4-amino-4,6-dideoxy-beta-L-AltNAc. The protein is UDP-4-amino-4,6-dideoxy-N-acetyl-beta-L-altrosamine transaminase (pseC) of Helicobacter pylori (strain ATCC 700392 / 26695) (Campylobacter pylori).